A 276-amino-acid polypeptide reads, in one-letter code: Putative pyruvate, phosphate dikinase regulatory protein (276 aa).

154–161 (GVSRTSKS) is a binding site for ADP.

This sequence belongs to the pyruvate, phosphate/water dikinase regulatory protein family. PDRP subfamily.

It carries out the reaction N(tele)-phospho-L-histidyl/L-threonyl-[pyruvate, phosphate dikinase] + ADP = N(tele)-phospho-L-histidyl/O-phospho-L-threonyl-[pyruvate, phosphate dikinase] + AMP + H(+). The catalysed reaction is N(tele)-phospho-L-histidyl/O-phospho-L-threonyl-[pyruvate, phosphate dikinase] + phosphate + H(+) = N(tele)-phospho-L-histidyl/L-threonyl-[pyruvate, phosphate dikinase] + diphosphate. In terms of biological role, bifunctional serine/threonine kinase and phosphorylase involved in the regulation of the pyruvate, phosphate dikinase (PPDK) by catalyzing its phosphorylation/dephosphorylation. The chain is Putative pyruvate, phosphate dikinase regulatory protein from Wolbachia pipientis wMel.